The sequence spans 650 residues: Chaperone protein HtpG (650 aa).

The tract at residues 1 to 349 (MSKTVKKFET…SSDLPLNVSR (349 aa)) is a; substrate-binding. The segment at 350-566 (EILQEDVQIK…EHGLNANMER (217 aa)) is b. The c stretch occupies residues 567 to 650 (ILRAMNQTVP…VADGKAAAGE (84 aa)).

Belongs to the heat shock protein 90 family. In terms of assembly, homodimer.

The protein resides in the cytoplasm. Functionally, molecular chaperone. Has ATPase activity. The polypeptide is Chaperone protein HtpG (Geobacter sulfurreducens (strain ATCC 51573 / DSM 12127 / PCA)).